The sequence spans 379 residues: Succinyl-diaminopimelate desuccinylase (379 aa).

His-70 lines the Zn(2+) pocket. Asp-72 is a catalytic residue. Residue Asp-103 participates in Zn(2+) binding. Glu-137 serves as the catalytic Proton acceptor. Zn(2+) is bound by residues Glu-138, Glu-166, and His-352.

Belongs to the peptidase M20A family. DapE subfamily. In terms of assembly, homodimer. Zn(2+) serves as cofactor. It depends on Co(2+) as a cofactor.

It carries out the reaction N-succinyl-(2S,6S)-2,6-diaminopimelate + H2O = (2S,6S)-2,6-diaminopimelate + succinate. It participates in amino-acid biosynthesis; L-lysine biosynthesis via DAP pathway; LL-2,6-diaminopimelate from (S)-tetrahydrodipicolinate (succinylase route): step 3/3. In terms of biological role, catalyzes the hydrolysis of N-succinyl-L,L-diaminopimelic acid (SDAP), forming succinate and LL-2,6-diaminopimelate (DAP), an intermediate involved in the bacterial biosynthesis of lysine and meso-diaminopimelic acid, an essential component of bacterial cell walls. In Shewanella sp. (strain W3-18-1), this protein is Succinyl-diaminopimelate desuccinylase.